The chain runs to 408 residues: Type II methyltransferase M.VspI (408 aa).

The protein belongs to the N(4)/N(6)-methyltransferase family.

It catalyses the reaction a 2'-deoxyadenosine in DNA + S-adenosyl-L-methionine = an N(6)-methyl-2'-deoxyadenosine in DNA + S-adenosyl-L-homocysteine + H(+). A gamma subtype methylase, recognizes the double-stranded sequence 5'-ATTAAT-3', methylates A-5 on both strands, and protects the DNA from cleavage by the VspI endonuclease. This is Type II methyltransferase M.VspI from Vibrio sp. (strain 343).